Here is a 124-residue protein sequence, read N- to C-terminus: Late histone H2B.2.1 (124 aa).

The tract at residues 1 to 32 is disordered; the sequence is MPAKQTSGKGAKKAGKAKGRPAGASKTRRRKR. Positions 10–19 are enriched in basic residues; it reads GAKKAGKAKG. Ser-111 carries an O-linked (GlcNAc) serine glycan. Lys-119 is covalently cross-linked (Glycyl lysine isopeptide (Lys-Gly) (interchain with G-Cter in ubiquitin)).

This sequence belongs to the histone H2B family. The nucleosome is a histone octamer containing two molecules each of H2A, H2B, H3 and H4 assembled in one H3-H4 heterotetramer and two H2A-H2B heterodimers. The octamer wraps approximately 147 bp of DNA. In terms of processing, monoubiquitination of Lys-119 gives a specific tag for epigenetic transcriptional activation and is also prerequisite for histone H3 'Lys-4' and 'Lys-79' methylation. Post-translationally, glcNAcylation at Ser-111 promotes monoubiquitination of Lys-119. It fluctuates in response to extracellular glucose, and associates with transcribed genes.

Its subcellular location is the nucleus. It localises to the chromosome. Its function is as follows. Core component of nucleosome. Nucleosomes wrap and compact DNA into chromatin, limiting DNA accessibility to the cellular machineries which require DNA as a template. Histones thereby play a central role in transcription regulation, DNA repair, DNA replication and chromosomal stability. DNA accessibility is regulated via a complex set of post-translational modifications of histones, also called histone code, and nucleosome remodeling. The sequence is that of Late histone H2B.2.1 from Psammechinus miliaris (Green sea urchin).